Here is a 1122-residue protein sequence, read N- to C-terminus: Protein phosphatase 1 regulatory subunit 3A (1122 aa).

The interval 32–58 (TFQPGFSPQPSRRGSDSSEDIYLDTPS) is disordered. 2 positions are modified to phosphoserine; by GSK3: serine 38 and serine 42. Serine 46 is subject to Phosphoserine; by PKA and ISPK. Residue serine 49 is modified to Phosphoserine. Phosphothreonine is present on threonine 56. The PP1-binding motif signature appears at 62-65 (RRVS). Phosphoserine; by PKA is present on serine 65. One can recognise a CBM21 domain in the interval 122–230 (QLQIQKAILE…NNNGTNYTFI (109 aa)). Disordered regions lie at residues 332 to 351 (STAS…NFPN), 395 to 422 (SSGD…LGDT), 496 to 516 (CLKE…NGKD), and 640 to 668 (GINS…SREN). Basic and acidic residues-rich tracts occupy residues 395-405 (SSGDDCTHQPS) and 499-516 (ESTE…NGKD). The span at 640–662 (GINSEDQDNSPQHKQSWNVLESQ) shows a compositional bias: polar residues. At serine 844 the chain carries Phosphoserine. Residues 963–977 (IEKHPYPESKPEEVS) are compositionally biased toward basic and acidic residues. Disordered regions lie at residues 963 to 983 (IEKH…SGIV) and 1025 to 1058 (RHEN…PVEE). Composition is skewed to polar residues over residues 1031–1040 (LVSSGQSLYT) and 1048–1058 (SSASTSLPVEE). Residues 1078–1098 (YFLLFLIFLITVYHYDLMIGL) form a helical membrane-spanning segment.

In terms of assembly, interacts with PPP1CC catalytic subunit of PP1, and associates with glycogen. Phosphorylation at Ser-46 by ISPK stimulates the dephosphorylation of glycogen synthase and phosphorylase kinase. Skeletal muscle and heart.

The protein resides in the membrane. Its function is as follows. Seems to act as a glycogen-targeting subunit for PP1. PP1 is essential for cell division, and participates in the regulation of glycogen metabolism, muscle contractility and protein synthesis. Plays an important role in glycogen synthesis but is not essential for insulin activation of glycogen synthase. The polypeptide is Protein phosphatase 1 regulatory subunit 3A (PPP1R3A) (Homo sapiens (Human)).